We begin with the raw amino-acid sequence, 179 residues long: uncharacterized protein (179 aa).

The first 26 residues, 1–26 (MKKNMILFFGILKKLLICILKMEIKC), serve as a signal peptide directing secretion.

This is an uncharacterized protein from Acheta domesticus (House cricket).